Reading from the N-terminus, the 147-residue chain is uncharacterized protein (147 aa).

Residues 3-23 form a helical membrane-spanning segment; sequence APMIGMVVLVVVLGLAVLALS.

To M.leprae ML1147.

It is found in the membrane. This is an uncharacterized protein from Mycobacterium tuberculosis (strain CDC 1551 / Oshkosh).